A 245-amino-acid chain; its full sequence is Uridylate kinase (245 aa).

Residue 18 to 21 participates in ATP binding; the sequence is KLSG. UMP is bound at residue Gly60. Positions 61 and 65 each coordinate ATP. Residues Asp80 and 141–148 each bind UMP; that span reads TGNPFFTT. ATP-binding residues include Thr168, Tyr174, and Asp177.

It belongs to the UMP kinase family. In terms of assembly, homohexamer.

It is found in the cytoplasm. The catalysed reaction is UMP + ATP = UDP + ADP. It functions in the pathway pyrimidine metabolism; CTP biosynthesis via de novo pathway; UDP from UMP (UMPK route): step 1/1. Its activity is regulated as follows. Inhibited by UTP. Catalyzes the reversible phosphorylation of UMP to UDP. In Pseudomonas aeruginosa (strain UCBPP-PA14), this protein is Uridylate kinase.